A 279-amino-acid chain; its full sequence is Bifunctional protein FolD (279 aa).

NADP(+) contacts are provided by residues 158-160 (GRS), Ser-183, and Ile-224.

This sequence belongs to the tetrahydrofolate dehydrogenase/cyclohydrolase family. Homodimer.

The enzyme catalyses (6R)-5,10-methylene-5,6,7,8-tetrahydrofolate + NADP(+) = (6R)-5,10-methenyltetrahydrofolate + NADPH. It catalyses the reaction (6R)-5,10-methenyltetrahydrofolate + H2O = (6R)-10-formyltetrahydrofolate + H(+). The protein operates within one-carbon metabolism; tetrahydrofolate interconversion. In terms of biological role, catalyzes the oxidation of 5,10-methylenetetrahydrofolate to 5,10-methenyltetrahydrofolate and then the hydrolysis of 5,10-methenyltetrahydrofolate to 10-formyltetrahydrofolate. This chain is Bifunctional protein FolD, found in Caldicellulosiruptor saccharolyticus (strain ATCC 43494 / DSM 8903 / Tp8T 6331).